A 499-amino-acid polypeptide reads, in one-letter code: Maturase K (499 aa).

Belongs to the intron maturase 2 family. MatK subfamily.

It is found in the plastid. The protein resides in the chloroplast. Functionally, usually encoded in the trnK tRNA gene intron. Probably assists in splicing its own and other chloroplast group II introns. The sequence is that of Maturase K from Batis maritima (Maritime saltwort).